The primary structure comprises 183 residues: Inner membrane-spanning protein YciB (183 aa).

Helical transmembrane passes span 22-42 (IYAATGVLIAATAIQLVITYL), 50-70 (MHLATFAMVTVFGSLTLFFHD), 72-92 (AFIKWKVSIVYALFAIGLIAS), 118-138 (VTWYWVGFFVLCSFANIYIAF), and 148-168 (FKVFGLTALTLINTVITVVYL).

It belongs to the YciB family.

It is found in the cell inner membrane. Its function is as follows. Plays a role in cell envelope biogenesis, maintenance of cell envelope integrity and membrane homeostasis. The polypeptide is Inner membrane-spanning protein YciB (Shewanella frigidimarina (strain NCIMB 400)).